We begin with the raw amino-acid sequence, 400 residues long: N(alpha)-acyl-glutamine aminoacylase (400 aa).

The protein belongs to the peptidase M20 family. It depends on Zn(2+) as a cofactor.

The catalysed reaction is an N(2)-acyl-L-glutamine + H2O = a carboxylate + L-glutamine. The enzyme catalyses N(2)-[(2E)-3-methylhex-2-enoyl]-L-glutaminate + H2O = (2E)-3-methylhex-2-enoate + L-glutamine. It carries out the reaction N(2)-(3-hydroxy-3-methylhexanoyl)-L-glutaminate + H2O = 3-hydroxy-3-methylhexanoate + L-glutamine. With respect to regulation, partial loss of activity with the combination Mn(2+) and chelating agents. Activity is lost in presence of 0.5 mM dithiothreitol. Functionally, hydrolyzes odorless N-alpha-acyl-L-glutamine conjugates of short- and medium-chain fatty acids, releasing human axillary malodor compounds. The enzyme is highly specific for the glutamine residue but has a low specificity for the acyl part of the substrate. The two most common products are 3-methyl-2-hexenoic acid (3M2H) and 3-hydroxy-3-methyl-hexanoic acid (HMHA), which are produced from the odorless precursors N-alpha-3-methyl-2-hexenoyl-L-glutamine (3M2H-Gln) and N-alpha-3-hydroxy-3-methylhexanoyl-L-glutamine (HMHA-Gln). In addition, over 28 different carboxylic acids contributing to human body odor are released by this enzyme from odorless axilla secretions, including several aliphatic 3-hydroxy acids with 4-Me branches, 3,4-unsaturated, 4-Et-branched aliphatic acids, and a variety of degradation products of amino acids. The protein is N(alpha)-acyl-glutamine aminoacylase of Corynebacterium striatum.